The sequence spans 340 residues: Glyceraldehyde-3-phosphate dehydrogenase (340 aa).

NAD(+)-binding positions include 13-14 and Gly-112; that span reads TI. 141–143 is a D-glyceraldehyde 3-phosphate binding site; that stretch reads SCN. The active-site Nucleophile is Cys-142. Arg-170 is a binding site for NAD(+). 196 to 197 serves as a coordination point for D-glyceraldehyde 3-phosphate; the sequence is HG. Gln-302 is a binding site for NAD(+).

Belongs to the glyceraldehyde-3-phosphate dehydrogenase family. In terms of assembly, homotetramer.

The protein resides in the cytoplasm. It carries out the reaction D-glyceraldehyde 3-phosphate + phosphate + NADP(+) = (2R)-3-phospho-glyceroyl phosphate + NADPH + H(+). The enzyme catalyses D-glyceraldehyde 3-phosphate + phosphate + NAD(+) = (2R)-3-phospho-glyceroyl phosphate + NADH + H(+). It functions in the pathway carbohydrate degradation; glycolysis; pyruvate from D-glyceraldehyde 3-phosphate: step 1/5. This Archaeoglobus fulgidus (strain ATCC 49558 / DSM 4304 / JCM 9628 / NBRC 100126 / VC-16) protein is Glyceraldehyde-3-phosphate dehydrogenase (gap).